A 105-amino-acid chain; its full sequence is Met repressor (105 aa).

Belongs to the MetJ family. In terms of assembly, homodimer.

Its subcellular location is the cytoplasm. In terms of biological role, this regulatory protein, when combined with SAM (S-adenosylmethionine) represses the expression of the methionine regulon and of enzymes involved in SAM synthesis. This chain is Met repressor, found in Haemophilus influenzae (strain 86-028NP).